We begin with the raw amino-acid sequence, 732 residues long: Trehalose phosphorylase (732 aa).

A propeptide spanning residues 1–25 (MAPPHQFQSKPSDVIRRRLSSAVSS) is cleaved from the precursor.

The protein belongs to the glycosyltransferase group 1 family. Glycosyltransferase 4 subfamily. Homodimer.

It carries out the reaction alpha,alpha-trehalose + phosphate = alpha-D-glucose + alpha-D-glucose 1-phosphate. Activity abolished by 1 mM Cu(2+). 0.1 mM Cu(2+) reduces trehalose phosphorolysis to 76% and trehalose synthesis to 48% of maximum activity. 1 mM Zn(2+) abolishes trehalose synthesis, and reduces trehalose phosphorolysis to 40% of maximum activity. Unaffected by EDTA. Its function is as follows. Reversibly catalyzes the synthesis and degradation of trehalose from glucose and alpha-D-glucose 1-phosphate. The equilibrium lies in the direction of trehalose synthesis. This is Trehalose phosphorylase from Grifola frondosa (Maitake).